The sequence spans 761 residues: Mitochondrial inner membrane m-AAA protease component YTA10 (761 aa).

Over M1 to E115 the chain is Mitochondrial matrix. Residues S67 to R101 form a disordered region. 2 stretches are compositionally biased toward basic and acidic residues: residues N72–G82 and N91–R101. Residues F116 to S136 traverse the membrane as a helical segment. Over S137 to S223 the chain is Mitochondrial intermembrane. The helical transmembrane segment at P224 to I244 threads the bilayer. Over T245–N761 the chain is Mitochondrial matrix. V290, A291, T332, G333, K334, T335, L336, and H472 together coordinate ATP. H558 serves as a coordination point for Zn(2+). The active site involves E559. Positions 562 and 634 each coordinate Zn(2+).

In the N-terminal section; belongs to the AAA ATPase family. It in the C-terminal section; belongs to the peptidase M41 family. In terms of assembly, component of the 850 kDa m-AAA protease complex, a heterohexamer composed of YTA12/RCA1 and YTA10/AFG3. Associates with the prohibitin complex, composed of PHB1 and PHB2, inhibiting the activity of the m-AAA protease complex. Zn(2+) is required as a cofactor.

The protein resides in the mitochondrion inner membrane. It catalyses the reaction ATP + H2O = ADP + phosphate + H(+). ATP hydrolysis is coordinated within m-AAA protease ring complexes: ATP-binding to YTA10/AFG3 inhibits ATP hydrolysis by the neighboring subunit YTA12/RCA1, leading to coordinated ATP hydrolysis within the AAA ATPase ring. Functionally, catalytic component of the m-AAA protease, a protease that plays a key role in proteostasis of inner mitochondrial membrane proteins. YTA10/AFG3 possesses both ATPase and protease activities: the ATPase activity is required to unfold substrates, threading them into the internal proteolytic cavity for hydrolysis into small peptide fragments. The complex is necessary for the assembly of mitochondrial respiratory chain and ATPase complexes. The m-AAA protease carries out protein quality control in the inner membrane of the mitochondria by mediating degradation of mistranslated or misfolded polypeptides. It also mediates protein maturation of the mitochondrial ribosomal subunit MRPL32/bL32m by catalyzing the cleavage of the presequence of MRPL32/bL32m prior to assembly into the mitochondrial ribosome. Promotes maturation of cytochrome c peroxidase (CCP1) by acting as a membrane protein dislocase via its ATPase activity: pulls the CCP1 transmembrane to the matrix prior to processing by the rhomboid protease PCP1. The membrane protein dislocase activity is also required to dislocate moderately hydrophobic transmembrane segments from the membrane. The protein is Mitochondrial inner membrane m-AAA protease component YTA10 of Saccharomyces cerevisiae (strain ATCC 204508 / S288c) (Baker's yeast).